We begin with the raw amino-acid sequence, 634 residues long: RING finger protein 207 (634 aa).

Residues 25–64 form an RING-type zinc finger; sequence CPLCHVQYERPCLLDCFHDFCAGCLRGRATDGRLTCPLCQ. The B box-type; atypical zinc finger occupies 93–145; the sequence is VEAVRCANCDLECSEQDVETTYFCNTCGQPLCARCRDETHRARMFARHDIVAL. The Zn(2+) site is built by C98, C101, C127, and H132. Coiled-coil stretches lie at residues 422 to 457 and 494 to 518; these read EHCR…KHHS and EIWE…HDLL. Positions 552-634 are disordered; sequence FQAPVDEQSE…DVPTWREHPT (83 aa).

As to quaternary structure, interacts with the core-glycosylated, but not the fully glycosylated form of KCNH2/HERG. Interacts with DNAJA1 and HSPA8. Interacts (via the C-terminus) with HSPA1A; this interaction additively increases KCNH2 expression.

The protein localises to the cytoplasm. Its function is as follows. Plays a role in cardiac repolarization possibly by stabilizing membrane expression of the potassium channel KCNH2/HERG, or by assisting its synthesis, folding or export from the endoplasmic reticulum, in a heat shock protein-dependent manner. The protein is RING finger protein 207 (RNF207) of Homo sapiens (Human).